Consider the following 171-residue polypeptide: KRAB domain-containing protein 4 (171 aa).

The 72-residue stretch at leucine 8–alanine 79 folds into the KRAB domain.

As to expression, expressed in brain, ovary, testis, prostate, tonsil, heart, bone marrow, colon, breast and kidney.

This chain is KRAB domain-containing protein 4 (KRBOX4), found in Homo sapiens (Human).